The following is a 318-amino-acid chain: Transaldolase (318 aa).

Lys-132 (schiff-base intermediate with substrate) is an active-site residue.

It belongs to the transaldolase family. Type 1 subfamily. As to quaternary structure, homodimer.

The protein resides in the cytoplasm. It catalyses the reaction D-sedoheptulose 7-phosphate + D-glyceraldehyde 3-phosphate = D-erythrose 4-phosphate + beta-D-fructose 6-phosphate. Its pathway is carbohydrate degradation; pentose phosphate pathway; D-glyceraldehyde 3-phosphate and beta-D-fructose 6-phosphate from D-ribose 5-phosphate and D-xylulose 5-phosphate (non-oxidative stage): step 2/3. In terms of biological role, transaldolase is important for the balance of metabolites in the pentose-phosphate pathway. The protein is Transaldolase of Shewanella sp. (strain MR-4).